Consider the following 154-residue polypeptide: UPF0225 protein Spro_2712 (154 aa).

It belongs to the UPF0225 family.

The sequence is that of UPF0225 protein Spro_2712 from Serratia proteamaculans (strain 568).